A 198-amino-acid chain; its full sequence is Probable GTP-binding protein EngB (198 aa).

Residues 22–195 form the EngB-type G domain; that stretch reads DLPEIALAGR…WKAIHKMTKT (174 aa). GTP contacts are provided by residues 30–37, 57–61, 75–78, 142–145, and 174–176; these read GRSNVGKS, GKTQT, DVPG, TKAD, and FSS. Residues Ser37 and Thr59 each coordinate Mg(2+).

Belongs to the TRAFAC class TrmE-Era-EngA-EngB-Septin-like GTPase superfamily. EngB GTPase family. Requires Mg(2+) as cofactor.

Its function is as follows. Necessary for normal cell division and for the maintenance of normal septation. This is Probable GTP-binding protein EngB from Bacillus mycoides (strain KBAB4) (Bacillus weihenstephanensis).